The following is a 538-amino-acid chain: Chaperonin GroEL 1 (538 aa).

Residues 30–33 (TLGP), K51, 87–91 (DGTTT), G415, 479–481 (NAA), and D495 each bind ATP.

It belongs to the chaperonin (HSP60) family. As to quaternary structure, forms a cylinder of 14 subunits composed of two heptameric rings stacked back-to-back. Interacts with the co-chaperonin GroES.

It is found in the cytoplasm. The catalysed reaction is ATP + H2O + a folded polypeptide = ADP + phosphate + an unfolded polypeptide.. Functionally, together with its co-chaperonin GroES, plays an essential role in assisting protein folding. The GroEL-GroES system forms a nano-cage that allows encapsulation of the non-native substrate proteins and provides a physical environment optimized to promote and accelerate protein folding. The sequence is that of Chaperonin GroEL 1 from Chromobacterium violaceum (strain ATCC 12472 / DSM 30191 / JCM 1249 / CCUG 213 / NBRC 12614 / NCIMB 9131 / NCTC 9757 / MK).